Here is a 315-residue protein sequence, read N- to C-terminus: Ribosomal RNA small subunit methyltransferase H (315 aa).

S-adenosyl-L-methionine contacts are provided by residues 33–35, aspartate 52, phenylalanine 84, aspartate 106, and glutamine 113; that span reads GGH. The disordered stretch occupies residues 295–315; the sequence is SDELEENNRSHSAKLRVAEKL.

It belongs to the methyltransferase superfamily. RsmH family.

The protein localises to the cytoplasm. It catalyses the reaction cytidine(1402) in 16S rRNA + S-adenosyl-L-methionine = N(4)-methylcytidine(1402) in 16S rRNA + S-adenosyl-L-homocysteine + H(+). Its function is as follows. Specifically methylates the N4 position of cytidine in position 1402 (C1402) of 16S rRNA. This chain is Ribosomal RNA small subunit methyltransferase H, found in Lactobacillus gasseri (strain ATCC 33323 / DSM 20243 / BCRC 14619 / CIP 102991 / JCM 1131 / KCTC 3163 / NCIMB 11718 / NCTC 13722 / AM63).